The sequence spans 124 residues: Large ribosomal subunit protein eL31 (124 aa).

This sequence belongs to the eukaryotic ribosomal protein eL31 family.

The chain is Large ribosomal subunit protein eL31 (RpL31) from Aedes aegypti (Yellowfever mosquito).